We begin with the raw amino-acid sequence, 378 residues long: MKILVDENMPYARDLFSRLGEVTAVPGRPIPVAQLADADALMVRSVTKVNESLLAGKPIKFVGTATAGTDHIDEAWLKQAGIGFSAAPGCNAIAVVEYVFSSLLMLAERDGFSLHERTVGIVGVGNVGRRLQARLEALGITTLLCDPPRADRGDEGDFRSLNELVQHADILTFHTPLFKDGPYKTLHLADEKLIRSLKPGAILINACRGAVVDNTALLTCLNEGQKLSVVLDVWEGEPELNVELLKKVDIGTPHIAGYTLEGKARGTTQVFEAYSKFIGHEQHVALDTLLPAPEFGRITLHGPLDQPTLKRLVHLVYDVRRDDAPLRKVAGIPGEFDKLRKNYLERREWSSLYVICDDASAASLLCKLGFNAVHHPAR.

Residues S45 and T66 each contribute to the substrate site. NAD(+)-binding residues include D146 and T175. The active site involves R208. NAD(+) is bound at residue D232. The active site involves E237. H254 functions as the Proton donor in the catalytic mechanism. G257 lines the NAD(+) pocket. Y258 contributes to the substrate binding site.

This sequence belongs to the D-isomer specific 2-hydroxyacid dehydrogenase family. PdxB subfamily. In terms of assembly, homodimer.

The protein localises to the cytoplasm. The catalysed reaction is 4-phospho-D-erythronate + NAD(+) = (R)-3-hydroxy-2-oxo-4-phosphooxybutanoate + NADH + H(+). It functions in the pathway cofactor biosynthesis; pyridoxine 5'-phosphate biosynthesis; pyridoxine 5'-phosphate from D-erythrose 4-phosphate: step 2/5. In terms of biological role, catalyzes the oxidation of erythronate-4-phosphate to 3-hydroxy-2-oxo-4-phosphonooxybutanoate. The polypeptide is Erythronate-4-phosphate dehydrogenase (Escherichia coli O7:K1 (strain IAI39 / ExPEC)).